Consider the following 365-residue polypeptide: UDP-N-acetylglucosamine--N-acetylmuramyl-(pentapeptide) pyrophosphoryl-undecaprenol N-acetylglucosamine transferase (365 aa).

UDP-N-acetyl-alpha-D-glucosamine is bound by residues 17–19 (TGG), Asn129, Arg167, Ser194, Ile250, 269–274 (ALTVSE), and Gln295.

This sequence belongs to the glycosyltransferase 28 family. MurG subfamily.

It is found in the cell inner membrane. The enzyme catalyses di-trans,octa-cis-undecaprenyl diphospho-N-acetyl-alpha-D-muramoyl-L-alanyl-D-glutamyl-meso-2,6-diaminopimeloyl-D-alanyl-D-alanine + UDP-N-acetyl-alpha-D-glucosamine = di-trans,octa-cis-undecaprenyl diphospho-[N-acetyl-alpha-D-glucosaminyl-(1-&gt;4)]-N-acetyl-alpha-D-muramoyl-L-alanyl-D-glutamyl-meso-2,6-diaminopimeloyl-D-alanyl-D-alanine + UDP + H(+). Its pathway is cell wall biogenesis; peptidoglycan biosynthesis. Functionally, cell wall formation. Catalyzes the transfer of a GlcNAc subunit on undecaprenyl-pyrophosphoryl-MurNAc-pentapeptide (lipid intermediate I) to form undecaprenyl-pyrophosphoryl-MurNAc-(pentapeptide)GlcNAc (lipid intermediate II). The chain is UDP-N-acetylglucosamine--N-acetylmuramyl-(pentapeptide) pyrophosphoryl-undecaprenol N-acetylglucosamine transferase from Shewanella piezotolerans (strain WP3 / JCM 13877).